The chain runs to 30 residues: Trypsin inhibitor 6 (30 aa).

Disulfide bonds link cysteine 4–cysteine 21, cysteine 11–cysteine 23, and cysteine 17–cysteine 29.

Belongs to the protease inhibitor I7 (squash-type serine protease inhibitor) family.

The protein resides in the secreted. Its function is as follows. Strongly inhibits trypsin, weakly inhibits chymotrypsin. This Cyclanthera pedata (Achocha) protein is Trypsin inhibitor 6.